The primary structure comprises 292 residues: Putative pyruvate, phosphate dikinase regulatory protein (292 aa).

155-162 (GVSRSSKT) provides a ligand contact to ADP.

This sequence belongs to the pyruvate, phosphate/water dikinase regulatory protein family. PDRP subfamily.

The catalysed reaction is N(tele)-phospho-L-histidyl/L-threonyl-[pyruvate, phosphate dikinase] + ADP = N(tele)-phospho-L-histidyl/O-phospho-L-threonyl-[pyruvate, phosphate dikinase] + AMP + H(+). The enzyme catalyses N(tele)-phospho-L-histidyl/O-phospho-L-threonyl-[pyruvate, phosphate dikinase] + phosphate + H(+) = N(tele)-phospho-L-histidyl/L-threonyl-[pyruvate, phosphate dikinase] + diphosphate. Bifunctional serine/threonine kinase and phosphorylase involved in the regulation of the pyruvate, phosphate dikinase (PPDK) by catalyzing its phosphorylation/dephosphorylation. This is Putative pyruvate, phosphate dikinase regulatory protein from Acidiphilium cryptum (strain JF-5).